The chain runs to 276 residues: uncharacterized protein (276 aa).

Residues 20–137 (PVLIFIPGAN…PPINTFLPDS (118 aa)) enclose the AB hydrolase-1 domain. Residues 57 to 76 (GESELTEPLPDSASNPDSDY) form a disordered region.

Belongs to the AB hydrolase superfamily.

This is an uncharacterized protein from Staphylococcus aureus (strain COL).